The following is a 1320-amino-acid chain: Clustered mitochondria protein homolog (1320 aa).

3 disordered regions span residues 166–241 (QQLE…KQKM), 552–582 (YGSMDTPTNEEEEQQQKEENEENKNNNTKSI), and 683–708 (LKEKEERQKKEGIDPPTATARDEDVQ). Residues 185–194 (TEDKEEKETI) show a composition bias toward basic and acidic residues. The span at 202 to 213 (KKNKHHNKKGNK) shows a compositional bias: basic residues. 3 stretches are compositionally biased toward basic and acidic residues: residues 226–241 (NEEKLTPQQKERKQKM), 565–575 (QQQKEENEENK), and 683–695 (LKEKEERQKKEGI). In terms of domain architecture, Clu spans 379-649 (KTNRYDINKG…KATPRDPNYT (271 aa)). TPR repeat units follow at residues 955–988 (GLDLLEAGKTFFNQRKYELATELLGEALAIYHQV), 997–1030 (GACFTHLAMLAYQNEQYDLAIEYQKNALVITEKT), 1039–1072 (VQAYTTLAVFCQRSGRYNESIGYMKHVLYLTDLL), 1081–1114 (ASIYTAIAAILEDTERFDLALEFLKQTLKHQEFL), and 1123–1156 (STTYHKMAIVCARATNFDDSIIHQKKSTDILEKE). Positions 1204–1320 (KADQFKKSQP…SKPNKKSSKN (117 aa)) are disordered. Positions 1237 to 1247 (KPKKSQSKKSK) are enriched in basic residues. A compositionally biased stretch (low complexity) spans 1248-1311 (STNTTTTTNT…PTSSSAADSS (64 aa)).

It belongs to the CLU family.

It localises to the cytoplasm. In terms of biological role, mRNA-binding protein involved in proper cytoplasmic distribution of mitochondria. The protein is Clustered mitochondria protein homolog of Dictyostelium discoideum (Social amoeba).